Here is a 342-residue protein sequence, read N- to C-terminus: uncharacterized protein (342 aa).

Residues Ile3–Ile173 form the MurNAc-LAA domain.

The protein to C.perfringens CPE1502.

This is an uncharacterized protein from Clostridium perfringens.